The following is a 475-amino-acid chain: MSDTEQERWSRVKGRLRSTVGEDIYSSWFARMDLESVHGESVRLSVPTRFLKSWIQAHYAERVLSCWQAELPDVHRIDLTVRSAMRCAAPVREAPATDARHPERSEGRNGVELKTVATAPASANHDALGGSPLDPRLTFQSFVTGRSNTLAHAAARQVAEGRRGDSVMFNPLYIHAGVGLGKTHLLQAVTWAGNAGTERRVLYLTAEKFMYGFVAALKTQTALAFKEALRGIDVLVIDDLQFLQGKSTQAEFCHTLNALIDAGRQVVIAADRPPSDLESLDDRVRSRLAGGLVVEMGSLGEELRLGILRSRVEAARVHHASFDVPEPVLDYLAKAITHNGRDLEGAINRLLAHSKLNAQPVTLEMAEREVRDLVRPQEPRRIKIEDIQRVVARQYNVSRSDLLSSRRTANVVRPRQVAMYLAKTLTLRSLPEIGRRFGGRDHTTVLHAVRKIEALVSKDTTLSDEVELLKRQLQE.

Positions 1-73 (MSDTEQERWS…LSCWQAELPD (73 aa)) are domain I, interacts with DnaA modulators. Residues 73–131 (DVHRIDLTVRSAMRCAAPVREAPATDARHPERSEGRNGVELKTVATAPASANHDALGGS) form a domain II region. Residues 132–354 (PLDPRLTFQS…GAINRLLAHS (223 aa)) form a domain III, AAA+ region region. The ATP site is built by Gly-179, Gly-181, Lys-182, and Thr-183. Residues 355–475 (KLNAQPVTLE…VELLKRQLQE (121 aa)) form a domain IV, binds dsDNA region.

Belongs to the DnaA family. In terms of assembly, oligomerizes as a right-handed, spiral filament on DNA at oriC.

It is found in the cytoplasm. Functionally, plays an essential role in the initiation and regulation of chromosomal replication. ATP-DnaA binds to the origin of replication (oriC) to initiate formation of the DNA replication initiation complex once per cell cycle. Binds the DnaA box (a 9 base pair repeat at the origin) and separates the double-stranded (ds)DNA. Forms a right-handed helical filament on oriC DNA; dsDNA binds to the exterior of the filament while single-stranded (ss)DNA is stabiized in the filament's interior. The ATP-DnaA-oriC complex binds and stabilizes one strand of the AT-rich DNA unwinding element (DUE), permitting loading of DNA polymerase. After initiation quickly degrades to an ADP-DnaA complex that is not apt for DNA replication. Binds acidic phospholipids. This Nitrobacter winogradskyi (strain ATCC 25391 / DSM 10237 / CIP 104748 / NCIMB 11846 / Nb-255) protein is Chromosomal replication initiator protein DnaA.